The following is a 299-amino-acid chain: Protoheme IX farnesyltransferase (299 aa).

The next 9 membrane-spanning stretches (helical) occupy residues 27 to 47 (VVAL…HEHF), 53 to 73 (LIAL…NHLI), 97 to 117 (FNVL…LMLW), 121 to 141 (LTAY…TLYL), 149 to 169 (IVIA…SITG), 175 to 195 (AWVL…ALAI), 222 to 242 (ILLY…VGMA), 244 to 264 (YLYL…AIKL), and 273 to 293 (AIEM…ALLL).

This sequence belongs to the UbiA prenyltransferase family. Protoheme IX farnesyltransferase subfamily.

The protein resides in the cell inner membrane. The enzyme catalyses heme b + (2E,6E)-farnesyl diphosphate + H2O = Fe(II)-heme o + diphosphate. The protein operates within porphyrin-containing compound metabolism; heme O biosynthesis; heme O from protoheme: step 1/1. In terms of biological role, converts heme B (protoheme IX) to heme O by substitution of the vinyl group on carbon 2 of heme B porphyrin ring with a hydroxyethyl farnesyl side group. The sequence is that of Protoheme IX farnesyltransferase from Vibrio vulnificus (strain CMCP6).